Reading from the N-terminus, the 908-residue chain is Flap endonuclease GEN homolog 1 (908 aa).

Positions glycine 2–proline 96 are XPG-N domain. Mg(2+) is bound by residues aspartate 30, glutamate 75, glutamate 134, glutamate 136, aspartate 155, aspartate 157, and aspartate 208. The tract at residues glutamate 122 to aspartate 208 is XPG-I domain. The segment at aspartate 208–methionine 383 is 5'-3' exonuclease domain. The tract at residues glycine 389–lysine 463 is chromodomain. 4 disordered regions span residues serine 460–alanine 482, tyrosine 629–proline 650, arginine 792–arginine 834, and alanine 853–asparagine 886. A compositionally biased stretch (basic residues) spans arginine 465–glycine 476. Phosphoserine occurs at positions 794 and 795. The segment covering histidine 824–arginine 834 has biased composition (basic and acidic residues).

It belongs to the XPG/RAD2 endonuclease family. GEN subfamily. In terms of assembly, largely monomeric, dimerizes on the Holliday junction and the first nick occurs upon dimerization at the junction. It depends on Mg(2+) as a cofactor. As to expression, expressed in bone marrow and testis and to a lesser extent in thymus, spleen, brain and colon.

The protein resides in the nucleus. Endonuclease which resolves Holliday junctions (HJs) by the introduction of symmetrically related cuts across the junction point, to produce nicked duplex products in which the nicks can be readily ligated. Four-way DNA intermediates, also known as Holliday junctions, are formed during homologous recombination and DNA repair, and their resolution is necessary for proper chromosome segregation. Cleaves HJs by a nick and counter-nick mechanism involving dual coordinated incisions that lead to the formation of ligatable nicked duplex products. Cleavage of the first strand is rate limiting, while second strand cleavage is rapid. Largely monomeric, dimerizes on the HJ and the first nick occurs upon dimerization at the junction. Efficiently cleaves both single and double HJs contained within large recombination intermediates. Exhibits a weak sequence preference for incision between two G residues that reside in a T-rich region of DNA. Also has endonuclease activity on 5'-flap and replication fork (RF) DNA substrates. The chain is Flap endonuclease GEN homolog 1 (Gen1) from Mus musculus (Mouse).